We begin with the raw amino-acid sequence, 505 residues long: 4-alpha-glucanotransferase (505 aa).

Belongs to the disproportionating enzyme family.

The protein resides in the cytoplasm. It carries out the reaction Transfers a segment of a (1-&gt;4)-alpha-D-glucan to a new position in an acceptor, which may be glucose or a (1-&gt;4)-alpha-D-glucan.. The polypeptide is 4-alpha-glucanotransferase (malQ) (Streptococcus pneumoniae serotype 4 (strain ATCC BAA-334 / TIGR4)).